A 427-amino-acid polypeptide reads, in one-letter code: Chaperone SurA (427 aa).

The N-terminal stretch at M1–A19 is a signal peptide. 2 consecutive PpiC domains span residues T170–D268 and V277–D377.

The protein localises to the periplasm. The catalysed reaction is [protein]-peptidylproline (omega=180) = [protein]-peptidylproline (omega=0). Its function is as follows. Chaperone involved in the correct folding and assembly of outer membrane proteins. Recognizes specific patterns of aromatic residues and the orientation of their side chains, which are found more frequently in integral outer membrane proteins. May act in both early periplasmic and late outer membrane-associated steps of protein maturation. The protein is Chaperone SurA of Vibrio parahaemolyticus serotype O3:K6 (strain RIMD 2210633).